Consider the following 238-residue polypeptide: tRNA (guanine-N(7)-)-methyltransferase (238 aa).

Residues glutamate 68, glutamate 93, aspartate 120, and aspartate 143 each contribute to the S-adenosyl-L-methionine site. The active site involves aspartate 143. Substrate is bound by residues lysine 147, aspartate 179, and 216–219 (TKFE).

The protein belongs to the class I-like SAM-binding methyltransferase superfamily. TrmB family.

The enzyme catalyses guanosine(46) in tRNA + S-adenosyl-L-methionine = N(7)-methylguanosine(46) in tRNA + S-adenosyl-L-homocysteine. It functions in the pathway tRNA modification; N(7)-methylguanine-tRNA biosynthesis. In terms of biological role, catalyzes the formation of N(7)-methylguanine at position 46 (m7G46) in tRNA. The protein is tRNA (guanine-N(7)-)-methyltransferase of Shewanella putrefaciens (strain CN-32 / ATCC BAA-453).